A 424-amino-acid polypeptide reads, in one-letter code: UPF0229 protein YPTS_2141 (424 aa).

Positions 84-109 (TNDRVDRPQGGGGGGSGQGNAGKDGE) are disordered. Over residues 92-105 (QGGGGGGSGQGNAG) the composition is skewed to gly residues.

It belongs to the UPF0229 family.

This is UPF0229 protein YPTS_2141 from Yersinia pseudotuberculosis serotype IB (strain PB1/+).